Reading from the N-terminus, the 594-residue chain is Protein REBELOTE (594 aa).

Over residues 1 to 13 (MGKLGKKARKFAK) the composition is skewed to basic residues. Disordered regions lie at residues 1 to 21 (MGKLGKKARKFAKKNLQSVEK) and 35 to 58 (AKRNERHQAGDKQEKKVEQQPKKR). 3 short sequence motifs (nuclear localization signal) span residues 8-15 (ARKFAKKN), 35-42 (AKRNERHQ), and 512-519 (LKKFHERS). The span at 36 to 58 (KRNERHQAGDKQEKKVEQQPKKR) shows a compositional bias: basic and acidic residues.

This sequence belongs to the NOC2 family. Interacts with SWA2, NOC2 and NOC3 in both the nucleolus and nucleoplasm. Binds to ENAP1 and OBE1. In terms of tissue distribution, expressed at low levels in roots, shoots, leaves, stems, inflorescences, flowers and siliques, with highest levels dividing tissues.

It is found in the nucleus. It localises to the nucleolus. The protein resides in the nucleoplasm. Its function is as follows. Collaboratively with CYP40/SQN and ULT1, influences floral meristem (FM) determinacy in an AGAMOUS and SUPERMAN-dependent manner, thus contributing to the floral developmental homeostasis. The chain is Protein REBELOTE from Arabidopsis thaliana (Mouse-ear cress).